Here is a 587-residue protein sequence, read N- to C-terminus: Folylpolyglutamate synthase, mitochondrial (587 aa).

The N-terminal 42 residues, 1 to 42, are a transit peptide targeting the mitochondrion; the sequence is MSRARSHLRAALFLAAASARGITTQVAARRGLSAWPVPQEPS. The residue at position 43 (Met43) is an N-acetylmethionine. 106 to 109 provides a ligand contact to ATP; the sequence is GKGS. Mg(2+) is bound by residues Ser130, Glu200, and His228. The ATP site is built by Arg363 and Asp377. Phosphoserine is present on Ser539.

It belongs to the folylpolyglutamate synthase family. In terms of assembly, monomer. K(+) serves as cofactor. The cofactor is NH4(+).

The protein localises to the mitochondrion inner membrane. It localises to the mitochondrion matrix. The protein resides in the cytoplasm. The enzyme catalyses (6S)-5,6,7,8-tetrahydrofolyl-(gamma-L-Glu)(n) + L-glutamate + ATP = (6S)-5,6,7,8-tetrahydrofolyl-(gamma-L-Glu)(n+1) + ADP + phosphate + H(+). The protein operates within cofactor biosynthesis; tetrahydrofolylpolyglutamate biosynthesis. Activated by 10 mM sodium bicarbonate. Functionally, catalyzes conversion of folates to polyglutamate derivatives allowing concentration of folate compounds in the cell and the intracellular retention of these cofactors, which are important substrates for most of the folate-dependent enzymes that are involved in one-carbon transfer reactions involved in purine, pyrimidine and amino acid synthesis. Unsubstituted reduced folates are the preferred substrates. Metabolizes methotrexate (MTX) to polyglutamates. This Homo sapiens (Human) protein is Folylpolyglutamate synthase, mitochondrial (FPGS).